The following is a 330-amino-acid chain: Beta-ketoacyl-[acyl-carrier-protein] synthase III (330 aa).

Catalysis depends on residues Cys-115 and His-255. Residues 256 to 260 (QANFR) are ACP-binding. Residue Asn-285 is part of the active site.

Belongs to the thiolase-like superfamily. FabH family. As to quaternary structure, homodimer.

It is found in the cytoplasm. The catalysed reaction is malonyl-[ACP] + acetyl-CoA + H(+) = 3-oxobutanoyl-[ACP] + CO2 + CoA. Its pathway is lipid metabolism; fatty acid biosynthesis. Its function is as follows. Catalyzes the condensation reaction of fatty acid synthesis by the addition to an acyl acceptor of two carbons from malonyl-ACP. Catalyzes the first condensation reaction which initiates fatty acid synthesis and may therefore play a role in governing the total rate of fatty acid production. Possesses both acetoacetyl-ACP synthase and acetyl transacylase activities. Its substrate specificity determines the biosynthesis of branched-chain and/or straight-chain of fatty acids. The polypeptide is Beta-ketoacyl-[acyl-carrier-protein] synthase III (Helicobacter pylori (strain HPAG1)).